We begin with the raw amino-acid sequence, 423 residues long: Torsin-4A (423 aa).

The disordered stretch occupies residues Pro47–Arg68. Phosphoserine occurs at positions 63 and 81. The residue at position 89 (Thr89) is a Phosphothreonine. Ser106 carries the post-translational modification Phosphoserine. The helical transmembrane segment at Cys122–Ile138 threads the bilayer. Residue Gly194–Ser201 coordinates ATP.

Belongs to the ClpA/ClpB family. Torsin subfamily.

Its subcellular location is the membrane. This is Torsin-4A (TOR4A) from Homo sapiens (Human).